We begin with the raw amino-acid sequence, 230 residues long: uncharacterized protein (230 aa).

The N-terminal stretch at 1–22 is a signal peptide; sequence MNIRSFLLISIFTAISYLVVDG. Topologically, residues 23–167 are lumenal; the sequence is ATPRTFAPSA…YTPYGGVKAL (145 aa). The segment at 55-90 is disordered; the sequence is SSSSSSSSISTSHDSQPSTSSSSPSSTSTSSSSGTS. Residues 168 to 188 form a helical membrane-spanning segment; sequence IGILVGVVVGSVFLLAIVMVI. Over 189 to 230 the chain is Cytoplasmic; the sequence is ARIWGPRLLANKDQNNNNEDLDSNLVSKDSEGTPQITYASNF. The interval 208–230 is disordered; it reads DLDSNLVSKDSEGTPQITYASNF.

It is found in the endoplasmic reticulum membrane. This is an uncharacterized protein from Schizosaccharomyces pombe (strain 972 / ATCC 24843) (Fission yeast).